We begin with the raw amino-acid sequence, 1465 residues long: DNA polymerase III PolC-type (1465 aa).

Residues 427 to 583 (YVVFDVETTG…YDAEATGRLL (157 aa)) form the Exonuclease domain.

It belongs to the DNA polymerase type-C family. PolC subfamily.

Its subcellular location is the cytoplasm. The enzyme catalyses DNA(n) + a 2'-deoxyribonucleoside 5'-triphosphate = DNA(n+1) + diphosphate. In terms of biological role, required for replicative DNA synthesis. This DNA polymerase also exhibits 3' to 5' exonuclease activity. This chain is DNA polymerase III PolC-type, found in Streptococcus pyogenes serotype M5 (strain Manfredo).